Consider the following 502-residue polypeptide: Lysine--tRNA ligase (502 aa).

The Mg(2+) site is built by Glu409 and Glu416.

This sequence belongs to the class-II aminoacyl-tRNA synthetase family. As to quaternary structure, homodimer. It depends on Mg(2+) as a cofactor.

Its subcellular location is the cytoplasm. It catalyses the reaction tRNA(Lys) + L-lysine + ATP = L-lysyl-tRNA(Lys) + AMP + diphosphate. The sequence is that of Lysine--tRNA ligase from Shouchella clausii (strain KSM-K16) (Alkalihalobacillus clausii).